We begin with the raw amino-acid sequence, 255 residues long: Tryptophan synthase alpha chain (255 aa).

Residues Glu-42 and Asp-53 each act as proton acceptor in the active site.

The protein belongs to the TrpA family. In terms of assembly, tetramer of two alpha and two beta chains.

The catalysed reaction is (1S,2R)-1-C-(indol-3-yl)glycerol 3-phosphate + L-serine = D-glyceraldehyde 3-phosphate + L-tryptophan + H2O. The protein operates within amino-acid biosynthesis; L-tryptophan biosynthesis; L-tryptophan from chorismate: step 5/5. Its function is as follows. The alpha subunit is responsible for the aldol cleavage of indoleglycerol phosphate to indole and glyceraldehyde 3-phosphate. The polypeptide is Tryptophan synthase alpha chain (Wolinella succinogenes (strain ATCC 29543 / DSM 1740 / CCUG 13145 / JCM 31913 / LMG 7466 / NCTC 11488 / FDC 602W) (Vibrio succinogenes)).